Reading from the N-terminus, the 547-residue chain is ATP synthase subunit alpha (547 aa).

Glycine 172 to threonine 179 is a binding site for ATP.

Belongs to the ATPase alpha/beta chains family. As to quaternary structure, F-type ATPases have 2 components, CF(1) - the catalytic core - and CF(0) - the membrane proton channel. CF(1) has five subunits: alpha(3), beta(3), gamma(1), delta(1), epsilon(1). CF(0) has three main subunits: a(1), b(2) and c(9-12). The alpha and beta chains form an alternating ring which encloses part of the gamma chain. CF(1) is attached to CF(0) by a central stalk formed by the gamma and epsilon chains, while a peripheral stalk is formed by the delta and b chains.

It is found in the cell membrane. The enzyme catalyses ATP + H2O + 4 H(+)(in) = ADP + phosphate + 5 H(+)(out). In terms of biological role, produces ATP from ADP in the presence of a proton gradient across the membrane. The alpha chain is a regulatory subunit. This Rhodococcus jostii (strain RHA1) protein is ATP synthase subunit alpha.